Here is a 227-residue protein sequence, read N- to C-terminus: Cytidylate kinase (227 aa).

12–20 provides a ligand contact to ATP; that stretch reads GPSGAGKGT.

This sequence belongs to the cytidylate kinase family. Type 1 subfamily.

It is found in the cytoplasm. It carries out the reaction CMP + ATP = CDP + ADP. The enzyme catalyses dCMP + ATP = dCDP + ADP. The polypeptide is Cytidylate kinase (Shigella flexneri).